The sequence spans 416 residues: Glutamyl-tRNA reductase (416 aa).

Substrate-binding positions include 51-54 (TCNR), Ser-110, 115-117 (EPQ), and Gln-121. Cys-52 serves as the catalytic Nucleophile. 190 to 195 (GAGQTG) provides a ligand contact to NADP(+).

It belongs to the glutamyl-tRNA reductase family. In terms of assembly, homodimer.

The catalysed reaction is (S)-4-amino-5-oxopentanoate + tRNA(Glu) + NADP(+) = L-glutamyl-tRNA(Glu) + NADPH + H(+). It functions in the pathway porphyrin-containing compound metabolism; protoporphyrin-IX biosynthesis; 5-aminolevulinate from L-glutamyl-tRNA(Glu): step 1/2. In terms of biological role, catalyzes the NADPH-dependent reduction of glutamyl-tRNA(Glu) to glutamate 1-semialdehyde (GSA). In Francisella tularensis subsp. holarctica (strain OSU18), this protein is Glutamyl-tRNA reductase.